A 566-amino-acid chain; its full sequence is DBIRD complex subunit ZNF326 (566 aa).

2 disordered regions span residues 19–81 (HCGV…ESYD) and 145–180 (RPGFMEDRGRESYSSYSSFSSPHMKPAPVGSRGRGT). A compositionally biased stretch (gly residues) spans 59 to 73 (SHGGGGGGGGGGGNR). Positions 156–165 (SYSSYSSFSS) are enriched in low complexity. Positions 240 to 263 (KRKMMPQPYNKPGGTFIKKPKMTK) match the Bipartite nuclear localization signal motif. The disordered stretch occupies residues 314–347 (FGDSKGEGKSEEEEKRRIEARREKQRRRREKNSE). Positions 317–335 (SKGEGKSEEEEKRRIEARR) are enriched in basic and acidic residues. C2H2 AKAP95-type zinc fingers lie at residues 359 to 381 (CSFCKFRTFEEKEIESHLESAAH) and 452 to 475 (CSACSVYVPALHSSVQQHLKSPDH). The disordered stretch occupies residues 516–566 (PFEINDQAQEQQTEEEDKAEEPAEGEEEEEEEEEEETEEQTDFTLDHTEDN). The segment covering 527–556 (QTEEEDKAEEPAEGEEEEEEEEEEETEEQT) has biased composition (acidic residues).

It belongs to the AKAP95 family. In terms of assembly, component of the DBIRD complex.

The protein localises to the nucleus. Its function is as follows. Core component of the DBIRD complex, a multiprotein complex that acts at the interface between core mRNP particles and RNA polymerase II (RNAPII) and integrates transcript elongation with the regulation of alternative splicing. The chain is DBIRD complex subunit ZNF326 (ZNF326) from Gallus gallus (Chicken).